The chain runs to 340 residues: MIRGAPAPMAEPPPVVFCHDSPKRVLVSVIRTTPATPPCSSVGEPEPPPPLVPTSPGFSDFMVYPWRWGENAHNVTLSPGAAGGVVSAGLPVAAELPTLRGAPQSSASVAAVSGGEDEEEASSPDSGHLKDGIRRGRPRADTVRDLINEGEHSSSRIRCNICNRVFPREKSLQAHKRTHTGERPYLCDYPDCGKAFVQSGQLKTHQRLHTGEKPFVCSENGCLSRFTHANRHCPKHPYARLKREEPTDALSKHQSPDNKAAAEWLAKYWEMREQRTPTLKGKLVQKADQEQQDPLEYLQSDEEDDEKSGAQRRLQEQRERLHGALALIELANLTGAPLRQ.

The interval Gly-101–Ala-140 is disordered. Residues Gly-127 to Ala-140 are compositionally biased toward basic and acidic residues. 2 C2H2-type zinc fingers span residues Ile-157–His-179 and Tyr-185–His-209. Residues Lys-280–Gln-317 form a disordered region. A coiled-coil region spans residues Gln-299–Asn-332. Phosphoserine is present on Ser-300. Basic and acidic residues predominate over residues Lys-307–Gln-317.

It belongs to the krueppel C2H2-type zinc-finger protein family. Expressed in bone marrow and ovary.

It is found in the nucleus. Its function is as follows. Transcriptional activator. Isoform 1 may be involved in transcriptional activation of erythroid genes. This chain is Zinc finger protein 367 (Znf367), found in Mus musculus (Mouse).